The chain runs to 2175 residues: Homeobox protein cut (2175 aa).

Disordered regions lie at residues asparagine 139–glycine 170 and glycine 249–alanine 432. Composition is skewed to low complexity over residues leucine 153 to serine 169 and glycine 249 to serine 268. Residues serine 265–leucine 343 adopt a coiled-coil conformation. A compositionally biased stretch (acidic residues) spans aspartate 271–asparagine 294. Residues glutamine 309 to threonine 320 show a composition bias toward polar residues. Positions asparagine 344 to serine 359 are enriched in low complexity. A compositionally biased stretch (polar residues) spans arginine 360–alanine 374. Low complexity predominate over residues asparagine 384–asparagine 415. A coiled-coil region spans residues valine 433–leucine 499. Low complexity predominate over residues alanine 503 to aspartate 515. 2 disordered regions span residues alanine 503–lysine 600 and alanine 656–alanine 765. Residues alanine 546 to proline 568 show a composition bias toward acidic residues. The span at glutamine 673–leucine 696 shows a compositional bias: basic residues. Positions glutamine 697–serine 710 are enriched in low complexity. The span at histidine 714 to histidine 735 shows a compositional bias: basic residues. Low complexity predominate over residues threonine 738 to alanine 765. A DNA-binding region (CUT 1) is located at residues asparagine 877 to lysine 964. Disordered stretches follow at residues leucine 1001–glutamine 1083 and glutamine 1197–alanine 1289. Basic and acidic residues-rich tracts occupy residues glutamine 1009–lysine 1030 and glutamine 1062–glutamine 1083. Residues glutamate 1056–glutamine 1161 adopt a coiled-coil conformation. Over residues glycine 1249–serine 1282 the composition is skewed to low complexity. Residues glutamine 1330–lysine 1417 constitute a DNA-binding region (CUT 2). Residues alanine 1463–histidine 1522 are a coiled coil. Residues alanine 1507–glutamine 1540 are compositionally biased toward low complexity. Disordered stretches follow at residues alanine 1507 to methionine 1588, glutamate 1695 to lysine 1747, glutamine 1803 to phenylalanine 1826, arginine 1922 to threonine 1955, lysine 2069 to lysine 2097, and serine 2113 to tyrosine 2175. A compositionally biased stretch (gly residues) spans alanine 1564–glutamine 1573. A DNA-binding region (CUT 3) is located at residues tyrosine 1608–glutamate 1695. Over residues asparagine 1709–proline 1732 the composition is skewed to low complexity. Residues serine 1745–valine 1804 constitute a DNA-binding region (homeobox). Residues serine 1940 and serine 1944 each carry the phosphoserine modification. The span at proline 2126–alanine 2135 shows a compositional bias: pro residues. Over residues alanine 2136–tyrosine 2175 the composition is skewed to low complexity.

The protein belongs to the CUT homeobox family. Detected in many cells in the central nervous system, all external sensory organs, some peripheral neurons, and in the non-neural cells of the spiracles and the Malpighian tubules.

It localises to the nucleus. Functionally, regulator of cell fate decisions in multiple lineages. Specifically, functions as a determination factor that specifies sensory organ identity in precursor cells. Probably also involved in cell type specification of Malpighian tubules. In absence of cut gene external sensory organs are transformed into chordotonal organs. The chain is Homeobox protein cut (ct) from Drosophila melanogaster (Fruit fly).